A 253-amino-acid polypeptide reads, in one-letter code: MSSLIALGKRQTLLSHNEFLNFKNQKGFCKRFISQLNKKSNFPALAMTVPEATKYLKSVSISVPYVGSYMLSIALKSNRRAPSARGQIAFPHPFQEPPKICVFAKGAAADEALKLGATYVGAEDLVKKIQTEPLEFSKCFAHPNSAELLPQVAKLLGSKRLMPSIKRGTISDELKPLIESALTAVDYRQNDAGSINLPVGKLGFSDKELQENIEALVSNVRFTLAKLPGKVKVTVKHVHLSASHAIAIPLQYK.

The N-terminal 81 residues, 1–81 (MSSLIALGKR…SIALKSNRRA (81 aa)), are a transit peptide targeting the mitochondrion.

This sequence belongs to the universal ribosomal protein uL1 family. Component of the mitochondrial large ribosomal subunit (mt-LSU). Mature yeast 74S mitochondrial ribosomes consist of a small (37S) and a large (54S) subunit. The 37S small subunit contains a 15S ribosomal RNA (15S mt-rRNA) and at least 32 different proteins. The 54S large subunit contains a 21S rRNA (21S mt-rRNA) and at least 45 different proteins.

It localises to the mitochondrion. Its function is as follows. Component of the mitochondrial ribosome (mitoribosome), a dedicated translation machinery responsible for the synthesis of mitochondrial genome-encoded proteins, including at least some of the essential transmembrane subunits of the mitochondrial respiratory chain. The mitoribosomes are attached to the mitochondrial inner membrane and translation products are cotranslationally integrated into the membrane. The sequence is that of Large ribosomal subunit protein uL1m (mrpl1) from Schizosaccharomyces pombe (strain 972 / ATCC 24843) (Fission yeast).